Consider the following 196-residue polypeptide: Pyroglutamyl-peptidase 1-like protein (196 aa).

Residues Glu-65, Cys-127, and His-146 contribute to the active site.

This sequence belongs to the peptidase C15 family.

The polypeptide is Pyroglutamyl-peptidase 1-like protein (PGPEP1L) (Homo sapiens (Human)).